The following is a 208-amino-acid chain: NAD(P)H-quinone oxidoreductase subunit I (208 aa).

2 consecutive 4Fe-4S ferredoxin-type domains span residues G55–V84 and R95–E124. [4Fe-4S] cluster contacts are provided by C64, C67, C70, C74, C104, C107, C110, and C114.

The protein belongs to the complex I 23 kDa subunit family. In terms of assembly, NDH-1 is composed of at least 11 different subunits. [4Fe-4S] cluster serves as cofactor.

It localises to the cellular thylakoid membrane. The enzyme catalyses a plastoquinone + NADH + (n+1) H(+)(in) = a plastoquinol + NAD(+) + n H(+)(out). It carries out the reaction a plastoquinone + NADPH + (n+1) H(+)(in) = a plastoquinol + NADP(+) + n H(+)(out). Functionally, NDH-1 shuttles electrons from an unknown electron donor, via FMN and iron-sulfur (Fe-S) centers, to quinones in the respiratory and/or the photosynthetic chain. The immediate electron acceptor for the enzyme in this species is believed to be plastoquinone. Couples the redox reaction to proton translocation, and thus conserves the redox energy in a proton gradient. The chain is NAD(P)H-quinone oxidoreductase subunit I from Prochlorococcus marinus (strain MIT 9515).